Here is a 333-residue protein sequence, read N- to C-terminus: Phosphate acyltransferase (333 aa).

The protein belongs to the PlsX family. In terms of assembly, homodimer. Probably interacts with PlsY.

The protein localises to the cytoplasm. The catalysed reaction is a fatty acyl-[ACP] + phosphate = an acyl phosphate + holo-[ACP]. It functions in the pathway lipid metabolism; phospholipid metabolism. In terms of biological role, catalyzes the reversible formation of acyl-phosphate (acyl-PO(4)) from acyl-[acyl-carrier-protein] (acyl-ACP). This enzyme utilizes acyl-ACP as fatty acyl donor, but not acyl-CoA. This chain is Phosphate acyltransferase, found in Aliarcobacter butzleri (strain RM4018) (Arcobacter butzleri).